Consider the following 318-residue polypeptide: ATP phosphoribosyltransferase regulatory subunit (318 aa).

The protein belongs to the class-II aminoacyl-tRNA synthetase family. HisZ subfamily. Heteromultimer composed of HisG and HisZ subunits.

It is found in the cytoplasm. It participates in amino-acid biosynthesis; L-histidine biosynthesis; L-histidine from 5-phospho-alpha-D-ribose 1-diphosphate: step 1/9. Its function is as follows. Required for the first step of histidine biosynthesis. May allow the feedback regulation of ATP phosphoribosyltransferase activity by histidine. This is ATP phosphoribosyltransferase regulatory subunit from Lactococcus lactis subsp. cremoris (strain MG1363).